Here is a 161-residue protein sequence, read N- to C-terminus: 18.1 kDa class I heat shock protein (161 aa).

The sHSP domain occupies 45-160 (DVAAFTNARV…QVKSIDISGA (116 aa)).

The protein belongs to the small heat shock protein (HSP20) family. As to quaternary structure, may form oligomeric structures. Binds to AKR2A.

The protein resides in the cytoplasm. This Arabidopsis thaliana (Mouse-ear cress) protein is 18.1 kDa class I heat shock protein (HSP18.1).